A 486-amino-acid polypeptide reads, in one-letter code: Ribulose bisphosphate carboxylase large chain (486 aa).

2 residues coordinate substrate: Asn125 and Thr175. The Proton acceptor role is filled by Lys177. Lys179 is a binding site for substrate. Residues Lys203, Asp205, and Glu206 each contribute to the Mg(2+) site. Residue Lys203 is modified to N6-carboxylysine. His295 (proton acceptor) is an active-site residue. Arg296, His328, and Ser380 together coordinate substrate.

This sequence belongs to the RuBisCO large chain family. Type I subfamily. Heterohexadecamer of 8 large chains and 8 small chains. Mg(2+) is required as a cofactor.

It catalyses the reaction 2 (2R)-3-phosphoglycerate + 2 H(+) = D-ribulose 1,5-bisphosphate + CO2 + H2O. The catalysed reaction is D-ribulose 1,5-bisphosphate + O2 = 2-phosphoglycolate + (2R)-3-phosphoglycerate + 2 H(+). In terms of biological role, ruBisCO catalyzes two reactions: the carboxylation of D-ribulose 1,5-bisphosphate, the primary event in carbon dioxide fixation, as well as the oxidative fragmentation of the pentose substrate. Both reactions occur simultaneously and in competition at the same active site. This is Ribulose bisphosphate carboxylase large chain from Afipia carboxidovorans (strain ATCC 49405 / DSM 1227 / KCTC 32145 / OM5) (Oligotropha carboxidovorans).